We begin with the raw amino-acid sequence, 536 residues long: ATPase expression protein 3 (536 aa).

PPR repeat units follow at residues 212–246 (TTTM…KKTP) and 386–421 (TTGS…GVTP).

The protein resides in the mitochondrion inner membrane. Functionally, required for respiration. The polypeptide is ATPase expression protein 3 (AEP3) (Eremothecium gossypii (strain ATCC 10895 / CBS 109.51 / FGSC 9923 / NRRL Y-1056) (Yeast)).